Consider the following 165-residue polypeptide: Phosphopantetheine adenylyltransferase (165 aa).

Ser8 lines the substrate pocket. Residues 8–9 (SF) and His16 contribute to the ATP site. Substrate is bound by residues Lys40, Thr72, and Arg86. ATP contacts are provided by residues 87–89 (GLR), Glu97, and 122–128 (YSFLSSS).

The protein belongs to the bacterial CoaD family. In terms of assembly, homohexamer. Requires Mg(2+) as cofactor.

Its subcellular location is the cytoplasm. The catalysed reaction is (R)-4'-phosphopantetheine + ATP + H(+) = 3'-dephospho-CoA + diphosphate. It participates in cofactor biosynthesis; coenzyme A biosynthesis; CoA from (R)-pantothenate: step 4/5. Functionally, reversibly transfers an adenylyl group from ATP to 4'-phosphopantetheine, yielding dephospho-CoA (dPCoA) and pyrophosphate. The chain is Phosphopantetheine adenylyltransferase from Synechococcus sp. (strain WH7803).